The sequence spans 273 residues: 2,3,4,5-tetrahydropyridine-2,6-dicarboxylate N-succinyltransferase (273 aa).

Belongs to the transferase hexapeptide repeat family.

It is found in the cytoplasm. It carries out the reaction (S)-2,3,4,5-tetrahydrodipicolinate + succinyl-CoA + H2O = (S)-2-succinylamino-6-oxoheptanedioate + CoA. Its pathway is amino-acid biosynthesis; L-lysine biosynthesis via DAP pathway; LL-2,6-diaminopimelate from (S)-tetrahydrodipicolinate (succinylase route): step 1/3. This is 2,3,4,5-tetrahydropyridine-2,6-dicarboxylate N-succinyltransferase from Acinetobacter baumannii (strain SDF).